Here is a 210-residue protein sequence, read N- to C-terminus: Thymidylate kinase (210 aa).

10–17 is an ATP binding site; sequence GPEGAGKS.

The protein belongs to the thymidylate kinase family.

It catalyses the reaction dTMP + ATP = dTDP + ADP. Its function is as follows. Phosphorylation of dTMP to form dTDP in both de novo and salvage pathways of dTTP synthesis. The chain is Thymidylate kinase from Pseudomonas entomophila (strain L48).